A 460-amino-acid chain; its full sequence is Nuclear transport factor 2 (460 aa).

Positions 15–131 (VGRAFVEQYY…YFVLNDVFRF (117 aa)) constitute an NTF2 domain. 3 disordered regions span residues 207–226 (EPPT…GDAP), 238–289 (KSSP…VDVE), and 361–460 (RQAV…GGSS). An RRM domain is found at 293 to 370 (HSIYVRNLPF…RQAVVEEKKT (78 aa)). Over residues 373 to 382 (RGGGNNGGSR) the composition is skewed to gly residues. Positions 383-394 (GRYFSGRGSFRN) are enriched in low complexity. 2 stretches are compositionally biased toward gly residues: residues 399–416 (GGRG…GGEF) and 450–460 (GRGGARGGGSS).

As to quaternary structure, interacts with MBD6.

The protein localises to the cytoplasm. The protein resides in the nucleus. Its function is as follows. Involved in RNA-directed DNA methylation (RdDM). This chain is Nuclear transport factor 2, found in Arabidopsis thaliana (Mouse-ear cress).